The following is an 822-amino-acid chain: Sodium/hydrogen exchanger 1 (822 aa).

The Extracellular segment spans residues 1–102 (MMLRWSGIWG…FPVLDIDYLH (102 aa)). The tract at residues 41–73 (SPTANTIRGAEPPRERSIGDVTTAPSEPVHHPD) is disordered. A helical membrane pass occupies residues 103-125 (VRTPFEISLWILLACLMKIGFHV). Topologically, residues 126 to 134 (IPTISSIVP) are cytoplasmic. The helical transmembrane segment at 135–152 (ESCLLIVVGLLVGGLIKG) threads the bilayer. Residues 153–162 (VGETPPFLQS) lie on the Extracellular side of the membrane. Residues 163–180 (DVFFLFLLPPIILDAGYF) traverse the membrane as a helical segment. Over 181–190 (LPLRQFTENL) the chain is Cytoplasmic. The chain crosses the membrane as a helical span at residues 191 to 219 (GTILIFAVVGTLWNAFFLGGLLYAVCLVG). The Extracellular portion of the chain corresponds to 220 to 226 (GEQINNI). The chain crosses the membrane as a helical span at residues 227–253 (GLLDTLLFGSIISAVDPVAVVAVFEEI). The Cytoplasmic segment spans residues 254–256 (HIN). The helical transmembrane segment at 257-287 (ELLHILVFGESLLNDAVTVVLYHLFEEFANY) threads the bilayer. Topologically, residues 288–291 (DSIG) are extracellular. A helical membrane pass occupies residues 292 to 326 (ISDIFLGFLSFFVVALGGVFVGVVYGVIAAFTSRF). The Cytoplasmic portion of the chain corresponds to 327 to 332 (TSHIRV). A helical transmembrane segment spans residues 333–345 (IEPLFVFLYSYMA). Topologically, residues 346 to 354 (YLSAELFHL) are extracellular. Residues 355 to 375 (SGIMALIASGVVMRPYVEANI) traverse the membrane as a helical segment. Residues 376–377 (SH) are Cytoplasmic-facing. Residues 378 to 408 (KSHTTIKYFLKMWSSVSETLIFIFLGVSTVA) traverse the membrane as a helical segment. Over 409 to 414 (GSHQWN) the chain is Extracellular. A helical membrane pass occupies residues 415-442 (WTFVISTLLFCLIARVLGVLVLTWFINK). Over 443-448 (FRIVKL) the chain is Cytoplasmic. A helical membrane pass occupies residues 449 to 473 (TPKDQFIIAYGGLRGAIAFSLGYLM). Residues 474–479 (DKKHFP) lie on the Extracellular side of the membrane. The helical transmembrane segment at 480–509 (MCDLFLTAIITVIFFTVFVQGMTIRPLVDL) threads the bilayer. The tract at residues 507 to 549 (VDLLAVKKKQETKRSINEEIHTQFLDHLLTGIEDICGHYGHHH) is interaction with TESC. At 510–822 (LAVKKKQETK…EGEPFIPKGE (313 aa)) the chain is on the cytoplasmic side. The segment at 513–520 (KKKQETKR) is PI(4,5)P2-binding region. The segment at 519 to 549 (KRSINEEIHTQFLDHLLTGIEDICGHYGHHH) is interaction with CHP2. Positions 544–549 (HYGHHH) are confers pH-dependent PI(4,5)P2 binding. Residues 556-564 (RFNKKYVKK) are PI(4,5)P2-binding region. Ser-603 and Ser-606 each carry phosphoserine. Thr-607 carries the post-translational modification Phosphothreonine. Residues Ser-609 and Ser-652 each carry the phosphoserine modification. The segment at 637 to 822 (KILRSNLQKT…EGEPFIPKGE (186 aa)) is interaction with TESC. An interaction with CALM1 region spans residues 637 to 822 (KILRSNLQKT…EGEPFIPKGE (186 aa)). The interval 688–691 (LTVP) is interaction with PPP3CA. Residues Ser-697, Ser-701, and Ser-707 each carry the phosphoserine modification. The segment at 719–724 (PVITID) is interaction with PPP3CA. 3 positions are modified to phosphoserine: Ser-727, Ser-730, and Ser-733. Residues 752-822 (PTRLTRGEED…EGEPFIPKGE (71 aa)) are disordered. The residue at position 756 (Thr-756) is a Phosphothreonine. The segment covering 759–768 (EEDEDEDEDG) has biased composition (acidic residues). Thr-786 bears the Phosphothreonine mark. 3 positions are modified to phosphoserine: Ser-792, Ser-794, and Ser-803.

This sequence belongs to the monovalent cation:proton antiporter 1 (CPA1) transporter (TC 2.A.36) family. In terms of assembly, homodimer; dimerization is crucial for its function. Oligomer. Interacts with CALM in a calcium-dependent manner. Interacts with TESC. Interacts (via the juxtamembrane region of the cytoplasmic C-terminal domain) with CHP1; the interaction occurs at the plasma membrane in a calcium-dependent manner. Interacts with CHP2; the interaction occurs in a calcium-dependent manner. Interacts with EZR; regulates the cytoskeletal interactions of SLC9A1 and promotes stress fiber formation. Ubiquitinated, leading to its degradation by the proteasome. Ubiquitination is reduced by CHP1. In terms of processing, O-glycosylated. Post-translationally, palmitoylated; may play a major role in SLC9A1 regulation. Phosphorylation at Thr-786 increases SLC9A1 activity. Specifically dephosphorylated at Thr-786 by PPP3CA that negatively regulates SLC9A1 activity. Phosphorylation at Ser-652 by AKT1 reduces SLC9A1 binding to CALM1.

Its subcellular location is the cell membrane. It is found in the basolateral cell membrane. It carries out the reaction Na(+)(in) + H(+)(out) = Na(+)(out) + H(+)(in). It catalyses the reaction Li(+)(out) + H(+)(in) = Li(+)(in) + H(+)(out). The enzyme catalyses Li(+)(in) + Na(+)(out) = Li(+)(out) + Na(+)(in). Activated at acidic pHs. Inhibited by amiloride and 5-amino-substituted derivatives. Inhibited by cariporide and eniporide. Phosphatidylinositol 4,5-bisphosphate (PI(4,5)P2) and phosphatidylinositol 3,4,5-trisphosphate (PI(3,4,5)P3) bind and differentially regulate SLC9A1 activity. Its function is as follows. Electroneutral Na(+) /H(+) antiporter that extrudes Na(+) in exchange for external protons driven by the inward sodium ion chemical gradient, protecting cells from acidification that occurs from metabolism. Exchanges intracellular H(+) ions for extracellular Na(+) in 1:1 stoichiometry. Plays a key role in maintening intracellular pH neutral and cell volume, and thus is important for cell growth, proliferation, migration and survival. In addition, can transport lithium Li(+) and also functions as a Na(+)/Li(+) antiporter. SLC9A1 also functions in membrane anchoring and organization of scaffolding complexes that coordinate signaling inputs. This chain is Sodium/hydrogen exchanger 1 (SLC9A1), found in Cricetulus griseus (Chinese hamster).